Consider the following 164-residue polypeptide: Peptidyl-prolyl cis-trans isomerase A-like 4D (164 aa).

Positions 7–163 (FFEITRDGKP…KKITIADCGQ (157 aa)) constitute a PPIase cyclophilin-type domain.

Belongs to the cyclophilin-type PPIase family. PPIase A subfamily.

It localises to the cytoplasm. It catalyses the reaction [protein]-peptidylproline (omega=180) = [protein]-peptidylproline (omega=0). Functionally, PPIases accelerate the folding of proteins. It catalyzes the cis-trans isomerization of proline imidic peptide bonds in oligopeptides. In Homo sapiens (Human), this protein is Peptidyl-prolyl cis-trans isomerase A-like 4D.